Here is a 198-residue protein sequence, read N- to C-terminus: FMN-dependent NADH:quinone oxidoreductase (198 aa).

FMN is bound by residues Ser-10, 16–18 (SQS), 94–97 (MYNF), and 138–141 (TRGG).

It belongs to the azoreductase type 1 family. As to quaternary structure, homodimer. It depends on FMN as a cofactor.

The catalysed reaction is 2 a quinone + NADH + H(+) = 2 a 1,4-benzosemiquinone + NAD(+). It catalyses the reaction N,N-dimethyl-1,4-phenylenediamine + anthranilate + 2 NAD(+) = 2-(4-dimethylaminophenyl)diazenylbenzoate + 2 NADH + 2 H(+). Its function is as follows. Quinone reductase that provides resistance to thiol-specific stress caused by electrophilic quinones. In terms of biological role, also exhibits azoreductase activity. Catalyzes the reductive cleavage of the azo bond in aromatic azo compounds to the corresponding amines. The chain is FMN-dependent NADH:quinone oxidoreductase from Shewanella baltica (strain OS223).